Reading from the N-terminus, the 336-residue chain is tRNA (guanine(37)-N(1))-methyltransferase Trm5b (336 aa).

Residues arginine 186, 223–224 (DI), 251–252 (DV), and asparagine 265 each bind S-adenosyl-L-methionine.

Belongs to the class I-like SAM-binding methyltransferase superfamily. TRM5/TYW2 family. In terms of assembly, monomer.

The protein resides in the cytoplasm. It carries out the reaction guanosine(37) in tRNA + S-adenosyl-L-methionine = N(1)-methylguanosine(37) in tRNA + S-adenosyl-L-homocysteine + H(+). Specifically methylates the N1 position of guanosine-37 in various tRNAs. The chain is tRNA (guanine(37)-N(1))-methyltransferase Trm5b (trm5b) from Methanocaldococcus jannaschii (strain ATCC 43067 / DSM 2661 / JAL-1 / JCM 10045 / NBRC 100440) (Methanococcus jannaschii).